A 75-amino-acid polypeptide reads, in one-letter code: UPF0270 protein PSPPH_1506 (75 aa).

The protein belongs to the UPF0270 family.

The protein is UPF0270 protein PSPPH_1506 of Pseudomonas savastanoi pv. phaseolicola (strain 1448A / Race 6) (Pseudomonas syringae pv. phaseolicola (strain 1448A / Race 6)).